Reading from the N-terminus, the 376-residue chain is TraB domain-containing protein (376 aa).

Residue methionine 1 is modified to N-acetylmethionine. The segment at 1–34 is disordered; the sequence is MDGEEQQPPHEANVEPVVPSEASEPVPRVLSGDP. The segment covering 14–27 has biased composition (low complexity); it reads VEPVVPSEASEPVP. A Phosphothreonine modification is found at threonine 65.

This chain is TraB domain-containing protein (TRABD), found in Homo sapiens (Human).